The chain runs to 398 residues: Bifunctional enzyme IspD/IspF (398 aa).

The 2-C-methyl-D-erythritol 4-phosphate cytidylyltransferase stretch occupies residues 1–237 (MSISIAAIIL…QKKMQMFPDI (237 aa)). Residues 238–398 (RVGNGYDVHS…SVLYPGEIPQ (161 aa)) are 2-C-methyl-D-erythritol 2,4-cyclodiphosphate synthase. A divalent metal cation is bound by residues Asp-244 and His-246. Residues 244–246 (DVH) and 270–271 (HS) contribute to the 4-CDP-2-C-methyl-D-erythritol 2-phosphate site. His-278 provides a ligand contact to a divalent metal cation. 4-CDP-2-C-methyl-D-erythritol 2-phosphate contacts are provided by residues 292–294 (DIG), 368–371 (TTNE), Phe-375, and Arg-378.

The protein in the N-terminal section; belongs to the IspD/TarI cytidylyltransferase family. IspD subfamily. It in the C-terminal section; belongs to the IspF family. A divalent metal cation is required as a cofactor.

The enzyme catalyses 2-C-methyl-D-erythritol 4-phosphate + CTP + H(+) = 4-CDP-2-C-methyl-D-erythritol + diphosphate. The catalysed reaction is 4-CDP-2-C-methyl-D-erythritol 2-phosphate = 2-C-methyl-D-erythritol 2,4-cyclic diphosphate + CMP. It participates in isoprenoid biosynthesis; isopentenyl diphosphate biosynthesis via DXP pathway; isopentenyl diphosphate from 1-deoxy-D-xylulose 5-phosphate: step 2/6. Its pathway is isoprenoid biosynthesis; isopentenyl diphosphate biosynthesis via DXP pathway; isopentenyl diphosphate from 1-deoxy-D-xylulose 5-phosphate: step 4/6. Bifunctional enzyme that catalyzes the formation of 4-diphosphocytidyl-2-C-methyl-D-erythritol from CTP and 2-C-methyl-D-erythritol 4-phosphate (MEP) (IspD), and catalyzes the conversion of 4-diphosphocytidyl-2-C-methyl-D-erythritol 2-phosphate (CDP-ME2P) to 2-C-methyl-D-erythritol 2,4-cyclodiphosphate (ME-CPP) with a corresponding release of cytidine 5-monophosphate (CMP) (IspF). This Bartonella tribocorum (strain CIP 105476 / IBS 506) protein is Bifunctional enzyme IspD/IspF.